The chain runs to 949 residues: Translation initiation factor IF-2 (949 aa).

Disordered stretches follow at residues 46–82, 145–176, and 188–361; these read LTAS…EAEA, EPAV…ERAS, and IPIT…KTEL. Positions 152–162 are enriched in low complexity; it reads ASPAVTAAKPV. Positions 163–172 are enriched in pro residues; it reads PATPAAPPQP. A compositionally biased stretch (low complexity) spans 263 to 276; the sequence is PRDAAAPRPAGARP. A compositionally biased stretch (basic and acidic residues) spans 334 to 344; that stretch reads SREERQFDPFH. The tr-type G domain maps to 449–618; the sequence is ERPPVVTIMG…LLQADLMDLK (170 aa). The segment at 458–465 is G1; sequence GHVDHGKT. Residue 458–465 participates in GTP binding; the sequence is GHVDHGKT. The segment at 483-487 is G2; that stretch reads GITQH. Positions 504–507 are G3; it reads DTPG. GTP-binding positions include 504–508 and 558–561; these read DTPGH and NKID. The tract at residues 558-561 is G4; it reads NKID. The interval 594-596 is G5; the sequence is SAK.

Belongs to the TRAFAC class translation factor GTPase superfamily. Classic translation factor GTPase family. IF-2 subfamily.

The protein localises to the cytoplasm. In terms of biological role, one of the essential components for the initiation of protein synthesis. Protects formylmethionyl-tRNA from spontaneous hydrolysis and promotes its binding to the 30S ribosomal subunits. Also involved in the hydrolysis of GTP during the formation of the 70S ribosomal complex. The polypeptide is Translation initiation factor IF-2 (Trichlorobacter lovleyi (strain ATCC BAA-1151 / DSM 17278 / SZ) (Geobacter lovleyi)).